The sequence spans 596 residues: Transcription factor COE3 (596 aa).

The disordered stretch occupies residues 1 to 22 (MFGIQENIPRGGTTMKEEPLGS). The interaction with DNA stretch occupies residues 63–66 (RKSN). The C5-type zinc-finger motif lies at 151–170 (CRVLLTHEIMCSRCCDKKSC). 2 interaction with DNA regions span residues 197–204 (NCLKNAGN) and 236–239 (NNSK). The IPT/TIG domain occupies 263-346 (PCIKAISPSE…KGAPGRFVYT (84 aa)). Residues 451-483 (TSQANDQVGYSRNTSSVSPRGYVPSSTPQQSNY) are disordered.

Belongs to the COE family. As to quaternary structure, forms either a homodimer or a heterodimer with a related family member. In terms of tissue distribution, expressed in brain.

It is found in the nucleus. In terms of biological role, transcriptional activator. Recognizes variations of the palindromic sequence 5'-ATTCCCNNGGGAATT-3'. This Homo sapiens (Human) protein is Transcription factor COE3 (EBF3).